The following is a 132-amino-acid chain: Large ribosomal subunit protein uL14 (132 aa).

This sequence belongs to the universal ribosomal protein uL14 family. As to quaternary structure, part of the 50S ribosomal subunit. Forms a cluster with proteins L3 and L24e, part of which may contact the 16S rRNA in 2 intersubunit bridges.

In terms of biological role, binds to 23S rRNA. Forms part of two intersubunit bridges in the 70S ribosome. This is Large ribosomal subunit protein uL14 from Methanocaldococcus jannaschii (strain ATCC 43067 / DSM 2661 / JAL-1 / JCM 10045 / NBRC 100440) (Methanococcus jannaschii).